The sequence spans 944 residues: MLDDYYTWTYPDIPENVAQELLQLNGSLVVVGIVGRSDCDQANKMVAFGMEPPSEHTPKDGQMQCYYKPGTSILLLHFESTYDAEIAGQMIDVCIEDVDTPFDIDSFFEGIRCRFVRMMLLALHVCHIVVYVETGQTFDPTLITVFQLAKFAREQHLMQFLPQMLRETPAARMSERTRLCTPRILFLFENFPSDEPKTRECVSTYEFQMEDCIYELLRHHNIVTNSSSNSLVALPNNKQFVFFNAHEELREDTLMKAVECLNETMYKPDLKEEEEDLEILALAPFDGFVKPFALPVDEKEWDNQQYKKDHTVWNFLERHVQDALMGCFEAGSFKQHAQQGTFQLLNSKEWHDCMATMHTLLVENTKDPNLETSNEEYKNFLKNFDESLNYEKKFWAHLCELGLKKGIAAYKNAAPENYGSATHRQLLAEATLAFEEEGRGPQAQAALAKLASICHKHWQDGRQQCEQLSLRSHPCTLPKKVPHEKHNSGVIHISSCNCGRTQGRREDPFNLRQANYEFYEHIAQMCNLCVKVKQYQFPIFEPSVSDYRAAAFEAAFPLLNNGKSGAPQDEDAEEDEAEEEEGQEQEQPTEEQLQNTASNCCSQPLSPTFGSDLNMSIAGFGASLKESQASSEQLLNSEQNTTSSGTSSADTDNELVVELQEPAKKEAREDAGPAHAVSTSTTEYLPGLVHTVSNFGLLPLFPSWSLACVGPSSIYSHNTGLQEHFQSGFLSGANFLLPWDVQLRLVHAPKQQYQQQHHGKKQQRWKKQGDRLSLKIFVGMEYECSRGHRFMMCAPDRVLRGGADIERETCSMVVHNNMPLYYPCPCRSQNNFLAQLMRIHVVTPKAPVNIIVDPKVCVGRYTFTMGSIVPPRLSQSAYWIIRLPYVYQGDDVLIAPPEQLDPGYPLTGGYLLPGMFGVVETDPTLDLNEPDKMGASAAGNFTRI.

Disordered stretches follow at residues leucine 559–cysteine 601 and alanine 629–glutamate 654. Residues glutamine 568 to threonine 589 are compositionally biased toward acidic residues. Residues alanine 629 to asparagine 640 show a composition bias toward polar residues. Low complexity predominate over residues threonine 641 to aspartate 650.

This sequence belongs to the SMG8 family.

Functionally, involved in nonsense-mediated decay (NMD) of mRNAs containing premature stop codons. Probable component of kinase complex containing nonC and recruited to stalled ribosomes. The sequence is that of Nonsense-mediated mRNA decay factor SMG8 from Drosophila melanogaster (Fruit fly).